Here is a 144-residue protein sequence, read N- to C-terminus: MDIHEILKYLPHRYPLILVDRVVSLELGKRIHAYKNVSINEPYFSGHFPHHPVMPGVLIVEALAQAAALLTIRSENMEKDAGQVYYFVGIDGVRFKKPVIAGDQLVLKVEITRQLKGIWKYSACAEVDGQLVTEAQLMCTARAI.

Residue His47 is part of the active site.

The protein belongs to the thioester dehydratase family. FabZ subfamily.

The protein resides in the cytoplasm. The catalysed reaction is a (3R)-hydroxyacyl-[ACP] = a (2E)-enoyl-[ACP] + H2O. Involved in unsaturated fatty acids biosynthesis. Catalyzes the dehydration of short chain beta-hydroxyacyl-ACPs and long chain saturated and unsaturated beta-hydroxyacyl-ACPs. The protein is 3-hydroxyacyl-[acyl-carrier-protein] dehydratase FabZ of Nitrosomonas eutropha (strain DSM 101675 / C91 / Nm57).